Reading from the N-terminus, the 289-residue chain is Membrane protein insertase YidC (289 aa).

An N-terminal signal peptide occupies residues 1 to 19 (MKKKALLPLLLGIMVFLAG). Cys-20 carries the N-palmitoyl cysteine lipid modification. Cys-20 is lipidated: S-diacylglycerol cysteine. The next 5 helical transmembrane spans lie at 55 to 75 (YGLA…PFML), 133 to 153 (MLGC…FFVL), 177 to 197 (IWIT…STFS), 210 to 230 (MIIS…ALGL), and 231 to 251 (YWSV…AYYS). Positions 268 to 289 (EHGGSGNSKGAKVVSKKNKKKK) are disordered.

This sequence belongs to the OXA1/ALB3/YidC family. Type 2 subfamily.

It localises to the cell membrane. Required for the insertion and/or proper folding and/or complex formation of integral membrane proteins into the membrane. Involved in integration of membrane proteins that insert both dependently and independently of the Sec translocase complex, as well as at least some lipoproteins. The chain is Membrane protein insertase YidC from Staphylococcus carnosus (strain TM300).